The chain runs to 62 residues: Venom peptide 6 (62 aa).

The N-terminal stretch at 1–26 (MKSTSVFILFAGIAIMACLQMTGTEA) is a signal peptide. 3 AXPX repeats span residues 26–29 (AAPS), 30–33 (ASPN), and 40–43 (ADPD). A propeptide spanning residues 27–46 (APSASPNPTPVARADPDPEA) is cleaved from the precursor.

The protein belongs to the MCD family. In terms of tissue distribution, expressed by the venom gland.

It is found in the secreted. Its subcellular location is the target cell membrane. Its function is as follows. Antimicrobial peptide with strong activity against the fungus B.cinerea (MIC=5 uM) and the Gram-positive bacterium S.aureus (MIC=50 uM), and no activity against C.albicans (MIC&gt;200 uM), and the Gram-negative bacterium E.coli (MIC&gt;200 uM). Shows cytolytic activity against insect cell lines. Has no hemolytic activity against human erythrocytes. In vivo, peptide injection in the vicinity of the head and thorax of lepidopteran larvae induces feeding disorder that lasts one or two days before recovering. The chain is Venom peptide 6 from Eumenes pomiformis (Potter wasp).